A 492-amino-acid polypeptide reads, in one-letter code: Glutamyl-tRNA(Gln) amidotransferase subunit A (492 aa).

Residues Lys-79 and Ser-154 each act as charge relay system in the active site. The active-site Acyl-ester intermediate is the Ser-178.

This sequence belongs to the amidase family. GatA subfamily. Heterotrimer of A, B and C subunits.

It catalyses the reaction L-glutamyl-tRNA(Gln) + L-glutamine + ATP + H2O = L-glutaminyl-tRNA(Gln) + L-glutamate + ADP + phosphate + H(+). In terms of biological role, allows the formation of correctly charged Gln-tRNA(Gln) through the transamidation of misacylated Glu-tRNA(Gln) in organisms which lack glutaminyl-tRNA synthetase. The reaction takes place in the presence of glutamine and ATP through an activated gamma-phospho-Glu-tRNA(Gln). This chain is Glutamyl-tRNA(Gln) amidotransferase subunit A, found in Acinetobacter baylyi (strain ATCC 33305 / BD413 / ADP1).